Consider the following 330-residue polypeptide: Aspartate--ammonia ligase (330 aa).

Belongs to the class-II aminoacyl-tRNA synthetase family. AsnA subfamily.

It localises to the cytoplasm. It carries out the reaction L-aspartate + NH4(+) + ATP = L-asparagine + AMP + diphosphate + H(+). Its pathway is amino-acid biosynthesis; L-asparagine biosynthesis; L-asparagine from L-aspartate (ammonia route): step 1/1. This Streptococcus pyogenes serotype M2 (strain MGAS10270) protein is Aspartate--ammonia ligase.